We begin with the raw amino-acid sequence, 341 residues long: Probable 2' cyclic ADP-D-ribose synthase TcpO (341 aa).

The TIR domain occupies 204 to 336 (KEYDIFVSHS…EIIHEILERI (133 aa)). NAD(+)-binding positions include 213-214 (SS) and Lys243. Glu279 is a catalytic residue.

The catalysed reaction is NAD(+) + H2O = ADP-D-ribose + nicotinamide + H(+). It catalyses the reaction NAD(+) = 2'cADPR + nicotinamide + H(+). Functionally, NAD(+) hydrolase (NADase) that catalyzes cleavage of NAD(+) into ADP-D-ribose (ADPR) and nicotinamide. In addition to ADPR, also generates a cyclization variant of cyclic ADPR (cADPR), termed v-cADPR (probably 2'cADPR). The protein is Probable 2' cyclic ADP-D-ribose synthase TcpO of Methanobrevibacter olleyae.